The primary structure comprises 424 residues: UDP-N-acetylglucosamine 1-carboxyvinyltransferase (424 aa).

22–23 (KN) is a binding site for phosphoenolpyruvate. Residue Arg95 participates in UDP-N-acetyl-alpha-D-glucosamine binding. Cys119 (proton donor) is an active-site residue. Residue Cys119 is modified to 2-(S-cysteinyl)pyruvic acid O-phosphothioketal. UDP-N-acetyl-alpha-D-glucosamine is bound by residues 124–128 (RPVDQ), Asp311, and Ile333.

Belongs to the EPSP synthase family. MurA subfamily.

The protein resides in the cytoplasm. It carries out the reaction phosphoenolpyruvate + UDP-N-acetyl-alpha-D-glucosamine = UDP-N-acetyl-3-O-(1-carboxyvinyl)-alpha-D-glucosamine + phosphate. It functions in the pathway cell wall biogenesis; peptidoglycan biosynthesis. Its function is as follows. Cell wall formation. Adds enolpyruvyl to UDP-N-acetylglucosamine. This chain is UDP-N-acetylglucosamine 1-carboxyvinyltransferase, found in Polaromonas naphthalenivorans (strain CJ2).